A 644-amino-acid polypeptide reads, in one-letter code: Zinc finger protein 568 (644 aa).

Residues 48–119 enclose the KRAB domain; sequence VTFKDVAVDL…EEEMFGRHCP (72 aa). C2H2-type zinc fingers lie at residues 222 to 244, 250 to 272, 278 to 300, 306 to 328, 334 to 356, 362 to 384, 390 to 412, 418 to 440, 446 to 468, 474 to 496, 502 to 524, 530 to 552, 558 to 580, 586 to 608, and 614 to 636; these read FKCNQCGQDFSHKFDLIRHERIH, YECKECGKAFSRKENLITHQKIH, YKCNECGKAFIQMSNLIRHHRIH, YACKDCWKAFSQKSNLIEHERIH, YECKECGKSFSQKQNLIEHEKIH, YACNECGRAFSRMSSVTLHMRSH, YKCNKCGKAFSQCSVFIIHMRSH, YVCSECGKAFSQSSSLTVHMRNH, YECSECGKAFIQMSNLIRHQRIH, YACTVCGKAFSQKSNLTEHEKIH, YHCNQCGKAFSQRQNLLEHEKIH, FKCNECGKAFSRISSLTLHVRSH, YECNKCGKAFSQCSLLIIHMRSH, and FECNECGKAFSQRASLSIHKRGH.

It belongs to the krueppel C2H2-type zinc-finger protein family. In terms of assembly, interacts with TRIM28.

It is found in the nucleus. Has transcriptional repression activity, partially through the recruitment of the corepressor TRIM28 but also has repression activity independently of this interaction. Essential during embryonic development, where it acts as a direct repressor of a placental-specific transcript of IGF2 in early development and regulates convergent extension movements required for axis elongation and tissue morphogenesis in all germ layers. Also important for normal morphogenesis of extraembryonic tissues including the yolk sac, extraembryonic mesoderm and placenta. May enhance proliferation or maintenance of neural stem cells. This chain is Zinc finger protein 568 (ZNF568), found in Homo sapiens (Human).